A 144-amino-acid polypeptide reads, in one-letter code: Large ribosomal subunit protein uL16 (144 aa).

Belongs to the universal ribosomal protein uL16 family. In terms of assembly, part of the 50S ribosomal subunit.

In terms of biological role, binds 23S rRNA and is also seen to make contacts with the A and possibly P site tRNAs. The chain is Large ribosomal subunit protein uL16 from Levilactobacillus brevis (strain ATCC 367 / BCRC 12310 / CIP 105137 / JCM 1170 / LMG 11437 / NCIMB 947 / NCTC 947) (Lactobacillus brevis).